The primary structure comprises 333 residues: Ferredoxin--NADP reductase (333 aa).

The FAD site is built by Asp32, Gln40, Tyr45, Ala85, Phe119, Asp285, and Thr326.

It belongs to the ferredoxin--NADP reductase type 2 family. As to quaternary structure, homodimer. Requires FAD as cofactor.

The catalysed reaction is 2 reduced [2Fe-2S]-[ferredoxin] + NADP(+) + H(+) = 2 oxidized [2Fe-2S]-[ferredoxin] + NADPH. This Neorickettsia sennetsu (strain ATCC VR-367 / Miyayama) (Ehrlichia sennetsu) protein is Ferredoxin--NADP reductase.